We begin with the raw amino-acid sequence, 248 residues long: tRNA pseudouridine synthase A (248 aa).

Asp-54 serves as the catalytic Nucleophile. Tyr-112 lines the substrate pocket.

Belongs to the tRNA pseudouridine synthase TruA family. As to quaternary structure, homodimer.

The catalysed reaction is uridine(38/39/40) in tRNA = pseudouridine(38/39/40) in tRNA. Its function is as follows. Formation of pseudouridine at positions 38, 39 and 40 in the anticodon stem and loop of transfer RNAs. The chain is tRNA pseudouridine synthase A from Geobacillus sp. (strain WCH70).